The primary structure comprises 323 residues: Lipoyl synthase (323 aa).

[4Fe-4S] cluster is bound by residues Cys-61, Cys-66, Cys-72, Cys-87, Cys-91, Cys-94, and Ser-300. In terms of domain architecture, Radical SAM core spans Trp-73–Leu-289.

The protein belongs to the radical SAM superfamily. Lipoyl synthase family. The cofactor is [4Fe-4S] cluster.

The protein localises to the cytoplasm. It carries out the reaction [[Fe-S] cluster scaffold protein carrying a second [4Fe-4S](2+) cluster] + N(6)-octanoyl-L-lysyl-[protein] + 2 oxidized [2Fe-2S]-[ferredoxin] + 2 S-adenosyl-L-methionine + 4 H(+) = [[Fe-S] cluster scaffold protein] + N(6)-[(R)-dihydrolipoyl]-L-lysyl-[protein] + 4 Fe(3+) + 2 hydrogen sulfide + 2 5'-deoxyadenosine + 2 L-methionine + 2 reduced [2Fe-2S]-[ferredoxin]. It functions in the pathway protein modification; protein lipoylation via endogenous pathway; protein N(6)-(lipoyl)lysine from octanoyl-[acyl-carrier-protein]: step 2/2. In terms of biological role, catalyzes the radical-mediated insertion of two sulfur atoms into the C-6 and C-8 positions of the octanoyl moiety bound to the lipoyl domains of lipoate-dependent enzymes, thereby converting the octanoylated domains into lipoylated derivatives. This Rhizobium leguminosarum bv. trifolii (strain WSM2304) protein is Lipoyl synthase.